Reading from the N-terminus, the 662-residue chain is Transcription activator of gluconeogenesis NECHADRAFT_59099 (662 aa).

A disordered region spans residues 1-61 (MPHEMEENGA…KDPLRPRRKK (61 aa)). Composition is skewed to basic and acidic residues over residues 25–34 (TFLKDDEKMT) and 43–56 (TEVK…DPLR). Positions 66–94 (CFACQRAHLTCGDERPCQRCIKRGLADAC) form a DNA-binding region, zn(2)-C6 fungal-type. Disordered stretches follow at residues 105–149 (LHDA…TGSN), 502–524 (YSGR…MTTP), and 580–606 (YRAP…SSRV). Composition is skewed to polar residues over residues 121–130 (YNPTPTPSRT) and 137–149 (SSQS…TGSN). The region spanning 448 to 519 (TLVEYDDFLQ…TNTPDHNSQG (72 aa)) is the PAS domain. The span at 582-593 (APQDPDQKEPGS) shows a compositional bias: basic and acidic residues.

Belongs to the ERT1/acuK family.

It localises to the nucleus. In terms of biological role, transcription factor which regulates nonfermentable carbon utilization. Activator of gluconeogenetic genes. In Fusarium vanettenii (strain ATCC MYA-4622 / CBS 123669 / FGSC 9596 / NRRL 45880 / 77-13-4) (Fusarium solani subsp. pisi), this protein is Transcription activator of gluconeogenesis NECHADRAFT_59099.